The primary structure comprises 327 residues: Serine/threonine-protein phosphatase PP1-beta catalytic subunit (327 aa).

Alanine 2 is modified (N-acetylalanine). Positions 63, 65, 91, and 123 each coordinate Mn(2+). Histidine 124 functions as the Proton donor in the catalytic mechanism. Positions 172 and 247 each coordinate Mn(2+). A disordered region spans residues 305–327 (QYGGLNSGRPVTPPRTANPPKKR).

It belongs to the PPP phosphatase family. PP-1 subfamily. It depends on Mn(2+) as a cofactor.

The protein resides in the cytoplasm. The protein localises to the nucleus. It carries out the reaction O-phospho-L-seryl-[protein] + H2O = L-seryl-[protein] + phosphate. The catalysed reaction is O-phospho-L-threonyl-[protein] + H2O = L-threonyl-[protein] + phosphate. Protein phosphatase that associates with over 200 regulatory proteins to form highly specific holoenzymes which dephosphorylate hundreds of biological targets. Protein phosphatase (PP1) is essential for cell division, it participates in the regulation of glycogen metabolism, muscle contractility and protein synthesis. Involved in regulation of ionic conductances and long-term synaptic plasticity. This Xenopus laevis (African clawed frog) protein is Serine/threonine-protein phosphatase PP1-beta catalytic subunit (ppp1cb).